The sequence spans 409 residues: uncharacterized protein (409 aa).

The first 29 residues, 1 to 29 (MARSRCVHRVVHQAACIGVIGLSTSALTT), serve as a signal peptide directing secretion. Cys-30 carries the N-palmitoyl cysteine lipid modification. Cys-30 is lipidated: S-diacylglycerol cysteine.

This sequence belongs to the TP013X lipoprotein family.

Its subcellular location is the cell membrane. This is an uncharacterized protein from Treponema pallidum (strain Nichols).